A 226-amino-acid chain; its full sequence is 7-cyano-7-deazaguanine synthase (226 aa).

9 to 19 (YSGGLDSTTCL) contributes to the ATP binding site. Zn(2+) contacts are provided by Cys189, Cys199, Cys202, and Cys205.

Belongs to the QueC family. Zn(2+) is required as a cofactor.

It carries out the reaction 7-carboxy-7-deazaguanine + NH4(+) + ATP = 7-cyano-7-deazaguanine + ADP + phosphate + H2O + H(+). Its pathway is purine metabolism; 7-cyano-7-deazaguanine biosynthesis. In terms of biological role, catalyzes the ATP-dependent conversion of 7-carboxy-7-deazaguanine (CDG) to 7-cyano-7-deazaguanine (preQ(0)). The polypeptide is 7-cyano-7-deazaguanine synthase (Pelobacter propionicus (strain DSM 2379 / NBRC 103807 / OttBd1)).